A 146-amino-acid chain; its full sequence is UPF0260 protein VP2169 (146 aa).

The protein belongs to the UPF0260 family.

The chain is UPF0260 protein VP2169 from Vibrio parahaemolyticus serotype O3:K6 (strain RIMD 2210633).